We begin with the raw amino-acid sequence, 297 residues long: MLRLGSHVSMSGKKMLLGASEEAASYGSNTFMIYTGAPQNTRRKPIEELNIEAGLEHMKAHDMADIVVHAPYIINIGNSVKPETFELGVNFLQSEIERTRALGAKQIVLHPGAHVGEGADKGIKQIIQGLNEALIHDQDVQIALETMAGKGSECGRTFEELAQIIDGVTHNELLSVTFDTCHTHDAGYDIVNDFDGVLNEFDKIIGIDRLKVLHINDSKNERGAHKDRHANIGFGHIGFDALHYIVHHPQLSNIPKILETPYVGEDKASKKAPYKWEIAMLRNGEFDPDLLNKIQNS.

9 residues coordinate Zn(2+): histidine 69, histidine 110, glutamate 145, aspartate 179, histidine 182, histidine 214, aspartate 227, histidine 229, and glutamate 259.

The protein belongs to the AP endonuclease 2 family. It depends on Zn(2+) as a cofactor.

The enzyme catalyses Endonucleolytic cleavage to 5'-phosphooligonucleotide end-products.. Endonuclease IV plays a role in DNA repair. It cleaves phosphodiester bonds at apurinic or apyrimidinic (AP) sites, generating a 3'-hydroxyl group and a 5'-terminal sugar phosphate. In Listeria innocua serovar 6a (strain ATCC BAA-680 / CLIP 11262), this protein is Probable endonuclease 4.